We begin with the raw amino-acid sequence, 216 residues long: Cytochrome c biogenesis ATP-binding export protein CcmA (216 aa).

Residues 11–216 (VSASKLTCIR…RKIRLDYRFV (206 aa)) enclose the ABC transporter domain. Residue 43-50 (GPNGAGKT) participates in ATP binding.

Belongs to the ABC transporter superfamily. CcmA exporter (TC 3.A.1.107) family. As to quaternary structure, the complex is composed of two ATP-binding proteins (CcmA) and two transmembrane proteins (CcmB).

The protein resides in the cell inner membrane. The catalysed reaction is heme b(in) + ATP + H2O = heme b(out) + ADP + phosphate + H(+). Part of the ABC transporter complex CcmAB involved in the biogenesis of c-type cytochromes; once thought to export heme, this seems not to be the case, but its exact role is uncertain. Responsible for energy coupling to the transport system. This is Cytochrome c biogenesis ATP-binding export protein CcmA from Shewanella sp. (strain MR-7).